The primary structure comprises 1244 residues: Ras-specific guanine nucleotide-releasing factor 2 (1244 aa).

The PH 1 domain occupies 22-129; that stretch reads EGTKRGYLSK…WVEAIQQASY (108 aa). The stretch at 147–189 forms a coiled coil; sequence VQIVETEKVAANQLRTQLEDQDTEIERLKAEIIALNKTKERMR. Residues 201–230 form the IQ domain; sequence DIKKIKKVQSFMRGWLCRRKWKIIVQDYIC. Positions 239-425 constitute a DH domain; that stretch reads KRNQIVFNMV…EELSRVMHDE (187 aa). Positions 466 to 584 constitute a PH 2 domain; that stretch reads PSVERGKLSK…WTSDISQCID (119 aa). Residues 631–745 form the N-terminal Ras-GEF domain; that stretch reads KVPQIRYASV…PVRTRKLSLN (115 aa). Disordered regions lie at residues 704–743, 759–814, and 843–879; these read NRSG…RKLS, TTSS…NAEV, and PESP…AENS. Positions 706 to 715 are enriched in basic and acidic residues; it reads SGDHVNDKSP. The segment covering 728–743 has biased composition (polar residues); the sequence is SISSRTSSPVRTRKLS. Composition is skewed to low complexity over residues 759–774 and 781–806; these read TTSS…ANPT and NNNN…QSPG. In terms of domain architecture, Ras-GEF spans 1009-1241; that stretch reads SAMEIAEQIT…YDLSLKIEPR (233 aa).

It is found in the cytoplasm. It localises to the cell membrane. Its subcellular location is the endoplasmic reticulum membrane. In terms of biological role, functions as a calcium-regulated nucleotide exchange factor activating both Ras and rac1 through the exchange of bound GDP for GTP. May function in synaptic plasticity. In Danio rerio (Zebrafish), this protein is Ras-specific guanine nucleotide-releasing factor 2 (rasgrf2).